The chain runs to 270 residues: Formamidopyrimidine-DNA glycosylase (270 aa).

Catalysis depends on Pro2, which acts as the Schiff-base intermediate with DNA. Residue Glu3 is the Proton donor of the active site. Lys58 serves as the catalytic Proton donor; for beta-elimination activity. The DNA site is built by His91, Arg110, and Arg151. Residues 236 to 270 form an FPG-type zinc finger; it reads FVYGRGGENCKVCGTGLREIKLGQRASVYCPRCQS. Arg260 (proton donor; for delta-elimination activity) is an active-site residue.

This sequence belongs to the FPG family. Monomer. Zn(2+) serves as cofactor.

The catalysed reaction is Hydrolysis of DNA containing ring-opened 7-methylguanine residues, releasing 2,6-diamino-4-hydroxy-5-(N-methyl)formamidopyrimidine.. It catalyses the reaction 2'-deoxyribonucleotide-(2'-deoxyribose 5'-phosphate)-2'-deoxyribonucleotide-DNA = a 3'-end 2'-deoxyribonucleotide-(2,3-dehydro-2,3-deoxyribose 5'-phosphate)-DNA + a 5'-end 5'-phospho-2'-deoxyribonucleoside-DNA + H(+). Its function is as follows. Involved in base excision repair of DNA damaged by oxidation or by mutagenic agents. Acts as a DNA glycosylase that recognizes and removes damaged bases. Has a preference for oxidized purines, such as 7,8-dihydro-8-oxoguanine (8-oxoG). Has AP (apurinic/apyrimidinic) lyase activity and introduces nicks in the DNA strand. Cleaves the DNA backbone by beta-delta elimination to generate a single-strand break at the site of the removed base with both 3'- and 5'-phosphates. This Pseudomonas fluorescens (strain ATCC BAA-477 / NRRL B-23932 / Pf-5) protein is Formamidopyrimidine-DNA glycosylase.